A 514-amino-acid chain; its full sequence is 2-isopropylmalate synthase (514 aa).

The 264-residue stretch at 5-268 (LIIFDTTLRD…DVGLDTTQIV (264 aa)) folds into the Pyruvate carboxyltransferase domain. Positions 14, 202, 204, and 239 each coordinate Mn(2+). Residues 395–514 (KFVSLSQRSE…KDDKLNPQRS (120 aa)) are regulatory domain.

The protein belongs to the alpha-IPM synthase/homocitrate synthase family. LeuA type 1 subfamily. Homodimer. The cofactor is Mn(2+).

It localises to the cytoplasm. It carries out the reaction 3-methyl-2-oxobutanoate + acetyl-CoA + H2O = (2S)-2-isopropylmalate + CoA + H(+). It functions in the pathway amino-acid biosynthesis; L-leucine biosynthesis; L-leucine from 3-methyl-2-oxobutanoate: step 1/4. In terms of biological role, catalyzes the condensation of the acetyl group of acetyl-CoA with 3-methyl-2-oxobutanoate (2-ketoisovalerate) to form 3-carboxy-3-hydroxy-4-methylpentanoate (2-isopropylmalate). The polypeptide is 2-isopropylmalate synthase (Burkholderia ambifaria (strain ATCC BAA-244 / DSM 16087 / CCUG 44356 / LMG 19182 / AMMD) (Burkholderia cepacia (strain AMMD))).